The chain runs to 460 residues: Cysteine--tRNA ligase (460 aa).

C28 is a binding site for Zn(2+). Positions 30-40 match the 'HIGH' region motif; it reads NTVYDFCHIGH. Zn(2+) contacts are provided by C209, H234, and E238. A 'KMSKS' region motif is present at residues 266–270; it reads KMSKS. K269 is a binding site for ATP.

Belongs to the class-I aminoacyl-tRNA synthetase family. In terms of assembly, monomer. Requires Zn(2+) as cofactor.

The protein resides in the cytoplasm. The catalysed reaction is tRNA(Cys) + L-cysteine + ATP = L-cysteinyl-tRNA(Cys) + AMP + diphosphate. This Marinomonas sp. (strain MWYL1) protein is Cysteine--tRNA ligase.